A 391-amino-acid chain; its full sequence is MSVKKMADLDLTGKRLFIRADLNVPVKEGKITSDARIRATIPTLKLALQKGAKVMVTSHLGRPTEGVFEEANSLQPVVDYLNASDLGVPVRLVRDYLDGVEVNQNEIVVLENVRINKGEKKNDAELAKKYAALCDIFVMDAFGTAHRAECSTYGIAEFAPIACAGPLLAAELEALGKALKEPQRPMLAIVGGSKVSTKLTVLDSLSKIADQLIVGGGIANIFIAAEGHNVGKSLYEADLIPEAKRLASTTHIPVPVDVRVGTEFSETATATEKLVSEVTADESIFDIGDKSAEELAHIIKSAKTIFWNGPVGVFEFANFRKGTEIISNAIAEATANGAFSIAGGGDTLAAIDLFGIADKISYISTGGGAFLEFVEGKVLPAVEILEKRANS.

Substrate is bound by residues Asp-21–Asn-23, Arg-36, His-59–Arg-62, Arg-114, and Arg-147. ATP-binding positions include Lys-198, Glu-315, and Gly-344–Thr-347.

The protein belongs to the phosphoglycerate kinase family. In terms of assembly, monomer.

It is found in the cytoplasm. It catalyses the reaction (2R)-3-phosphoglycerate + ATP = (2R)-3-phospho-glyceroyl phosphate + ADP. It participates in carbohydrate degradation; glycolysis; pyruvate from D-glyceraldehyde 3-phosphate: step 2/5. The polypeptide is Phosphoglycerate kinase (Haemophilus ducreyi (strain 35000HP / ATCC 700724)).